Reading from the N-terminus, the 204-residue chain is Nucleoside triphosphate pyrophosphatase (204 aa).

The active-site Proton acceptor is Asp-79.

It belongs to the Maf family. Requires a divalent metal cation as cofactor.

It localises to the cytoplasm. It catalyses the reaction a ribonucleoside 5'-triphosphate + H2O = a ribonucleoside 5'-phosphate + diphosphate + H(+). It carries out the reaction a 2'-deoxyribonucleoside 5'-triphosphate + H2O = a 2'-deoxyribonucleoside 5'-phosphate + diphosphate + H(+). Functionally, nucleoside triphosphate pyrophosphatase. May have a dual role in cell division arrest and in preventing the incorporation of modified nucleotides into cellular nucleic acids. This chain is Nucleoside triphosphate pyrophosphatase, found in Trichodesmium erythraeum (strain IMS101).